A 225-amino-acid chain; its full sequence is UPF0758 protein BP1235 (225 aa).

An MPN domain is found at 103 to 225 (ALANPDLVRR…TVSMAAQGHL (123 aa)). The Zn(2+) site is built by histidine 174, histidine 176, and aspartate 187. Positions 174–187 (HNHPGGTAAASAAD) match the JAMM motif motif.

The protein belongs to the UPF0758 family.

The protein is UPF0758 protein BP1235 of Bordetella pertussis (strain Tohama I / ATCC BAA-589 / NCTC 13251).